A 79-amino-acid polypeptide reads, in one-letter code: Conotoxin Kt6.1 (79 aa).

A signal peptide spans 1-22 (MKLTCVLIISVLFLTASQLITA). A propeptide spanning residues 23-47 (VYSRDKQQYRAARLRDEMRNLKGAR) is cleaved from the precursor. 3 cysteine pairs are disulfide-bonded: cysteine 49–cysteine 62, cysteine 56–cysteine 67, and cysteine 61–cysteine 77. 2 positions are modified to 4-hydroxyproline: proline 60 and proline 63.

It belongs to the conotoxin O1 superfamily. Expressed by the venom duct.

The protein localises to the secreted. Its function is as follows. Ion channel inhibitor that inhibits the increase in intracellular calcium upon depolarization in DRG neurons. In vivo, both intraperitoneal and intracranial injections into mice induce hyperactivity. This chain is Conotoxin Kt6.1, found in Conus kintoki (Cone snail).